We begin with the raw amino-acid sequence, 119 residues long: Large ribosomal subunit protein bL20 (119 aa).

This sequence belongs to the bacterial ribosomal protein bL20 family.

Its function is as follows. Binds directly to 23S ribosomal RNA and is necessary for the in vitro assembly process of the 50S ribosomal subunit. It is not involved in the protein synthesizing functions of that subunit. The sequence is that of Large ribosomal subunit protein bL20 from Shewanella frigidimarina (strain NCIMB 400).